The chain runs to 186 residues: Protein GrpE (186 aa).

A compositionally biased stretch (basic and acidic residues) spans 1 to 22; it reads MSDSNKEKKKKFADMVSKRKGD. The tract at residues 1 to 35 is disordered; sequence MSDSNKEKKKKFADMVSKRKGDDQEDQQTGDLSEE. Positions 23–34 are enriched in acidic residues; the sequence is DQEDQQTGDLSE.

This sequence belongs to the GrpE family. As to quaternary structure, homodimer.

The protein localises to the cytoplasm. Participates actively in the response to hyperosmotic and heat shock by preventing the aggregation of stress-denatured proteins, in association with DnaK and GrpE. It is the nucleotide exchange factor for DnaK and may function as a thermosensor. Unfolded proteins bind initially to DnaJ; upon interaction with the DnaJ-bound protein, DnaK hydrolyzes its bound ATP, resulting in the formation of a stable complex. GrpE releases ADP from DnaK; ATP binding to DnaK triggers the release of the substrate protein, thus completing the reaction cycle. Several rounds of ATP-dependent interactions between DnaJ, DnaK and GrpE are required for fully efficient folding. The protein is Protein GrpE of Wolbachia pipientis subsp. Culex pipiens (strain wPip).